The chain runs to 357 residues: Phospho-N-acetylmuramoyl-pentapeptide-transferase (357 aa).

Helical transmembrane passes span 23-43 (AIFS…YFIY), 70-90 (TMGG…YCNL), 91-111 (SNIY…IGFI), 127-147 (LKWK…MIKI), 171-191 (YLYI…VNLT), 196-216 (GLAI…SLFS), 236-256 (LAIL…FNSY), 260-280 (VFMG…IAIL), 286-306 (LLII…LQII), and 334-354 (LIIV…LISL).

This sequence belongs to the glycosyltransferase 4 family. MraY subfamily. The cofactor is Mg(2+).

It localises to the cell inner membrane. The catalysed reaction is UDP-N-acetyl-alpha-D-muramoyl-L-alanyl-gamma-D-glutamyl-meso-2,6-diaminopimeloyl-D-alanyl-D-alanine + di-trans,octa-cis-undecaprenyl phosphate = di-trans,octa-cis-undecaprenyl diphospho-N-acetyl-alpha-D-muramoyl-L-alanyl-D-glutamyl-meso-2,6-diaminopimeloyl-D-alanyl-D-alanine + UMP. Its pathway is cell wall biogenesis; peptidoglycan biosynthesis. Catalyzes the initial step of the lipid cycle reactions in the biosynthesis of the cell wall peptidoglycan: transfers peptidoglycan precursor phospho-MurNAc-pentapeptide from UDP-MurNAc-pentapeptide onto the lipid carrier undecaprenyl phosphate, yielding undecaprenyl-pyrophosphoryl-MurNAc-pentapeptide, known as lipid I. The chain is Phospho-N-acetylmuramoyl-pentapeptide-transferase from Buchnera aphidicola subsp. Acyrthosiphon pisum (strain APS) (Acyrthosiphon pisum symbiotic bacterium).